We begin with the raw amino-acid sequence, 771 residues long: Metal transporter CNNM4 (771 aa).

Topologically, residues 1 to 175 are extracellular; the sequence is MAPGGGGGRR…LLFMVEEHGR (175 aa). A glycan (N-linked (GlcNAc...) asparagine) is linked at Asn119. One can recognise a CNNM transmembrane domain in the interval 175–355; that stretch reads RFLPLWLHIL…EPYNDLVKEE (181 aa). A helical membrane pass occupies residues 176–196; it reads FLPLWLHILLVMVLLVLSGIF. The Cytoplasmic portion of the chain corresponds to 197 to 237; it reads SGLNLGLMALDPMELRIVQNCGTEKERKYARKIEPIRRKGN. The segment at residues 238–258 is an intramembrane region (helical); that stretch reads YLLCSLLLGNVLVNTSLTILL. At 259-261 the chain is on the cytoplasmic side; the sequence is DNL. Residues 262 to 282 form a helical membrane-spanning segment; that stretch reads IGSGIMAVASSTIGIVIFGEI. Topologically, residues 283-290 are extracellular; the sequence is LPQALCSR. The chain crosses the membrane as a helical span at residues 291 to 313; that stretch reads HGLAVGANTIVLTKVFMLLTFPL. Topologically, residues 314–771 are cytoplasmic; the sequence is SFPISKLLDF…LHRASEEETI (458 aa). 2 CBS domains span residues 374–435 and 442–508; these read MTQL…CTPL and YNHP…ILDE. 3 positions are modified to phosphoserine: Ser657, Ser661, and Ser766.

It belongs to the ACDP family. As to quaternary structure, interacts with COX11. Cornea, retina, teeth (at protein level). In the retina it is predominantly localized to the outer plexiform layer, inner plexiform layer and ganglion cell layer. In the tooth strongest expression is observed in the cell body of the ameloblasts. Expressed at high levels in the gastrointestinal tract and testis.

The protein resides in the cell membrane. Functionally, probable metal transporter. The interaction with the metal ion chaperone COX11 suggests that it may play a role in sensory neuron functions. May play a role in biomineralization and retinal function. In Mus musculus (Mouse), this protein is Metal transporter CNNM4 (Cnnm4).